Reading from the N-terminus, the 283-residue chain is TIMELESS-interacting protein (283 aa).

The disordered stretch occupies residues 1-68 (MAMIDPLENN…SSSAARKAVK (68 aa)). Residues 15–24 (PDYENTEDET) show a composition bias toward acidic residues. The interval 74 to 150 (LDANRLVSER…KEVQTCLKRI (77 aa)) is interaction with TIMELESS. Disordered regions lie at residues 186-205 (GNVG…EQQQ) and 217-238 (RRQA…PSYP).

It belongs to the CSM3 family. As to quaternary structure, interacts with TIMELESS, which impairs TIMELESS self-association.

Its subcellular location is the cytoplasm. It localises to the nucleus. In terms of biological role, plays an important role in the control of DNA replication and the maintenance of replication fork stability. Important for cell survival after DNA damage or replication stress. May be required for the replication checkpoint induced by hydroxyurea or ultraviolet light. The sequence is that of TIMELESS-interacting protein (TIPIN) from Gallus gallus (Chicken).